Reading from the N-terminus, the 144-residue chain is Large ribosomal subunit protein uL16 (144 aa).

Residues 1 to 19 are compositionally biased toward basic residues; it reads MLLPKRVKYRRQHRPKTTG. The interval 1–23 is disordered; it reads MLLPKRVKYRRQHRPKTTGRSKG.

It belongs to the universal ribosomal protein uL16 family. In terms of assembly, part of the 50S ribosomal subunit.

Functionally, binds 23S rRNA and is also seen to make contacts with the A and possibly P site tRNAs. This is Large ribosomal subunit protein uL16 from Staphylococcus haemolyticus (strain JCSC1435).